The chain runs to 587 residues: MVIKCPNCDKNDFKSVRGLNCHISRIHPSSADGRGLRPSTDTRGRRDDKDIVVKDITCPFCDKNDFKSERGLSCHITRMHRSSSDGKGPRPSTGTRDRKDDRDGARPETLTPRHEDHERHNSDRDVVKGIAKVQRDSLQKGSPDNILLKDGARPETLTPRHEDHERHNSDRDVVKGVAKVQRESLQRGSPGNILLKNDAVGAKPESRPAKYKESPKQSRTTEEPHDRPLSSLSNFILSFNAPNFEKFVKMIEGSIVRPREDSTLRTESVNKFIDDLKVVMERISDIPLKLLKSGSYYDKTKIDYNNEFDFMFYADIKMEADFTNCPPGYCKIRKGVTVNKDLDPFIDRNGYLVPKLYKSHMFDIFEKCRTDPSFRKGRRTQLQDRKPESPAYTLLFDLGIPDKSPIDIDLVPAIRISGWPKTKDAREIQTGKWIDISTAKKAMECFHVVTKQFPEAHPDTNLLWRVSFSHAEKELILHADLSDKGCRKNVFKILKKIKENMKSKNPTEMDKFCSYHLKMFILGFYDTHSDFSKDQKLDMLKKGIEQLAKCVREGAIENYFIPKDNVLQSVPEEERRYVVRELEGLLQ.

2 disordered regions span residues 26–48 (IHPS…RRDD) and 77–229 (TRMH…DRPL). Basic and acidic residues-rich tracts occupy residues 95–138 (TRDR…RDSL), 150–185 (DGAR…RESL), and 204–228 (PESR…HDRP). 3 residues coordinate Mg(2+): E307, D309, and D409.

Belongs to the mab-21 family. Requires Mg(2+) as cofactor. Mn(2+) serves as cofactor.

It carries out the reaction UTP + ATP = 2',3'-cUAMP + 2 diphosphate. In terms of biological role, nucleotidyltransferase that catalyzes the formation of cyclic UMP-AMP (2',3'-cUAMP) from ATP and UTP and plays a key role in innate immunity. Acts as a key sensor of double-stranded DNA (dsDNA), the presence of dsDNA in the cytoplasm being a danger signal that triggers the immune responses. Directly binds dsDNA, activating the nucleotidyltransferase activity, leading to synthesis of 2',3'-cUAMP, a second messenger that binds to and activates Sting, thereby triggering the immune response via activation of the NF-kappa-B transcription factor. This Magallana gigas (Pacific oyster) protein is Cyclic GMP-AMP synthase-like receptor.